The sequence spans 271 residues: MVENIGSGSAELVSYAKLNLYLDVLGKRSDGYHEIVGLFQTISLHDTLTVEICDRGFYLESSVALPSDNTIKRAWEMFRKNTGKEFGLKVTLKKEIPVGSGLGGGSSNAAAVLRYLGEVFKIPLEDLLNIAAQVGSDVPFFLYGGTALVRGRGEIVEKLEDIEGYSVDLFFPGIHSSTKEMYLSLTPEMYRKGPGRVEELHRAYLERNYEKIKELSYNVFEKVFLEKHPEVMDGLRNFGDGSIVKMMTGSGSVFFALYPLDKGNYSFVGGV.

The active site involves Lys17. Residue 97 to 107 (PVGSGLGGGSS) coordinates ATP. Asp137 is an active-site residue.

Belongs to the GHMP kinase family. IspE subfamily.

The enzyme catalyses 4-CDP-2-C-methyl-D-erythritol + ATP = 4-CDP-2-C-methyl-D-erythritol 2-phosphate + ADP + H(+). Its pathway is isoprenoid biosynthesis; isopentenyl diphosphate biosynthesis via DXP pathway; isopentenyl diphosphate from 1-deoxy-D-xylulose 5-phosphate: step 3/6. Its function is as follows. Catalyzes the phosphorylation of the position 2 hydroxy group of 4-diphosphocytidyl-2C-methyl-D-erythritol. The polypeptide is 4-diphosphocytidyl-2-C-methyl-D-erythritol kinase (Thermotoga maritima (strain ATCC 43589 / DSM 3109 / JCM 10099 / NBRC 100826 / MSB8)).